The primary structure comprises 417 residues: MLLKAKDKEVYDAIASELNRQNSYLEMIASENFTSLEIMEAQGSVLTNKYAEGLPHKRYYGGCEYVDIVEDLAIQRAKELFKAEHANVQPHSGSQANMAVYMAVLKPGDTILGMSLAHGGHLTHGATVNFSGKIYNAVYYGVRESDYLIDYDQMYKLAKEHKPKMIIGGASAYPRVIDWAKMREIADSVGAYLMVDMAHYAGLIAGGVYPSPVEVSHFVTSTTHKTLRGPRSGFILSKQEFAKDIDKSVFPGTQGGPLMHVIAAKAVCFKEAMSDEFKQYAQQVVENARVLAEELLKEGINVLTGGTDSHMVLVDLRNIGITGKEAENRLGEAGITVNKNAVPFDPLPPTKTSGIRIGTPALTTRGMKEDQMKIIAKIIAKVLKNYSEDTLQKAREQVKDLCEAFPLYKELKDEICV.

(6S)-5,6,7,8-tetrahydrofolate-binding positions include leucine 116 and 120–122; that span reads GHL. Lysine 225 is modified (N6-(pyridoxal phosphate)lysine).

It belongs to the SHMT family. In terms of assembly, homodimer. Pyridoxal 5'-phosphate serves as cofactor.

The protein resides in the cytoplasm. It carries out the reaction (6R)-5,10-methylene-5,6,7,8-tetrahydrofolate + glycine + H2O = (6S)-5,6,7,8-tetrahydrofolate + L-serine. The protein operates within one-carbon metabolism; tetrahydrofolate interconversion. Its pathway is amino-acid biosynthesis; glycine biosynthesis; glycine from L-serine: step 1/1. Its function is as follows. Catalyzes the reversible interconversion of serine and glycine with tetrahydrofolate (THF) serving as the one-carbon carrier. This reaction serves as the major source of one-carbon groups required for the biosynthesis of purines, thymidylate, methionine, and other important biomolecules. Also exhibits THF-independent aldolase activity toward beta-hydroxyamino acids, producing glycine and aldehydes, via a retro-aldol mechanism. This chain is Serine hydroxymethyltransferase, found in Hydrogenobaculum sp. (strain Y04AAS1).